A 464-amino-acid polypeptide reads, in one-letter code: Potassium/proton antiporter CemA (464 aa).

The next 5 helical transmembrane spans lie at 36 to 56 (FSLSLWGILKYSGIYFCTEIL), 241 to 261 (ASVSLQYVGFLLFLFPIQIAI), 341 to 361 (LLLRLATNAISIATLFPLLIF), 389 to 409 (ILLLTDLCVGFHSPHGWEILV), and 425 to 445 (TPCFVSTFPVILDTLFKYWIF).

Belongs to the CemA family.

It is found in the plastid. The protein resides in the chloroplast inner membrane. It catalyses the reaction K(+)(in) + H(+)(out) = K(+)(out) + H(+)(in). Its function is as follows. Contributes to K(+)/H(+) antiport activity by supporting proton efflux to control proton extrusion and homeostasis in chloroplasts in a light-dependent manner to modulate photosynthesis. Prevents excessive induction of non-photochemical quenching (NPQ) under continuous-light conditions. Indirectly promotes efficient inorganic carbon uptake into chloroplasts. This is Potassium/proton antiporter CemA from Adiantum capillus-veneris (Maidenhair fern).